The primary structure comprises 530 residues: UDP-glucuronosyltransferase 2B17 (530 aa).

The N-terminal stretch at 1 to 23 (MPGKWISALLLLQISCCFRSVKC) is a signal peptide. N-linked (GlcNAc...) asparagine glycans are attached at residues Asn316 and Asn483. A helical transmembrane segment spans residues 494–510 (VIGFLLSCVATTIVLSV).

The protein belongs to the UDP-glycosyltransferase family.

The protein resides in the endoplasmic reticulum membrane. The catalysed reaction is glucuronate acceptor + UDP-alpha-D-glucuronate = acceptor beta-D-glucuronoside + UDP + H(+). It catalyses the reaction 17alpha-estradiol + UDP-alpha-D-glucuronate = 17alpha-estradiol 3-O-(beta-D-glucuronate) + UDP + H(+). It carries out the reaction 17alpha-estradiol + UDP-alpha-D-glucuronate = 17alpha-estradiol 17-O-(beta-D-glucuronate) + UDP + H(+). The enzyme catalyses 17beta-estradiol + UDP-alpha-D-glucuronate = 17beta-estradiol 17-O-(beta-D-glucuronate) + UDP + H(+). The catalysed reaction is 17beta-hydroxy-5alpha-androstan-3-one + UDP-alpha-D-glucuronate = 5alpha-dihydrotestosterone 17-O-(beta-D-glucuronate) + UDP + H(+). It catalyses the reaction testosterone + UDP-alpha-D-glucuronate = testosterone 17-O-(beta-D-glucuronate) + UDP + H(+). UDP-glucuronosyltransferase (UGT) that catalyzes phase II biotransformation reactions in which lipophilic substrates are conjugated with glucuronic acid to increase the metabolite's water solubility, thereby facilitating excretion into either the urine or bile. Catalyzes the glucuronidation of endogenous steroid hormones such as androgens (epitestosterone, androsterone) and estrogens (estradiol, epiestradiol). The polypeptide is UDP-glucuronosyltransferase 2B17 (Mus musculus (Mouse)).